The chain runs to 232 residues: Large ribosomal subunit protein uL1 (232 aa).

This sequence belongs to the universal ribosomal protein uL1 family. Part of the 50S ribosomal subunit.

Its function is as follows. Binds directly to 23S rRNA. The L1 stalk is quite mobile in the ribosome, and is involved in E site tRNA release. Protein L1 is also a translational repressor protein, it controls the translation of the L11 operon by binding to its mRNA. This chain is Large ribosomal subunit protein uL1, found in Stenotrophomonas maltophilia (strain R551-3).